We begin with the raw amino-acid sequence, 95 residues long: Protein TusB (95 aa).

The protein belongs to the DsrH/TusB family. As to quaternary structure, heterohexamer, formed by a dimer of trimers. The hexameric TusBCD complex contains 2 copies each of TusB, TusC and TusD. The TusBCD complex interacts with TusE.

The protein resides in the cytoplasm. In terms of biological role, part of a sulfur-relay system required for 2-thiolation of 5-methylaminomethyl-2-thiouridine (mnm(5)s(2)U) at tRNA wobble positions. The polypeptide is Protein TusB (Escherichia coli O157:H7).